Reading from the N-terminus, the 481-residue chain is Thiol protease (481 aa).

The region spanning 169–481 is the Calpain catalytic domain; it reads DLREQALSST…ENFWYIAYMY (313 aa). Residues Cys229, His406, and Asn426 contribute to the active site.

The protein belongs to the peptidase C2 family.

With respect to regulation, inactive below 20 degrees Celsius and pH 6.0. Inhibited by divalent cations. Thiol protease. Probably an important virulence factor. The chain is Thiol protease (tpr) from Porphyromonas gingivalis (strain ATCC BAA-308 / W83).